Consider the following 339-residue polypeptide: Transmembrane protein 120B (339 aa).

Residues 1–77 adopt a coiled-coil conformation; sequence MSGQLERCER…ASREEAELVQ (77 aa). 6 helical membrane-spanning segments follow: residues 102-124, 132-152, 159-179, 187-207, 270-290, and 302-322; these read GLYL…AKFA, FKLY…FVLH, VFNF…SILI, GWWV…LTWP, FLLP…VTLF, and QVFV…LTTL.

Belongs to the TMEM120 family. As to quaternary structure, heterooligomer with TMEM120A.

It localises to the nucleus inner membrane. Functionally, necessary for efficient adipogenesis. Does not show ion channel activity. In Homo sapiens (Human), this protein is Transmembrane protein 120B.